A 1227-amino-acid polypeptide reads, in one-letter code: Tyrosine-protein kinase receptor ver-3 (1227 aa).

The signal sequence occupies residues 1–17; sequence MKLKLTVLLILVHASAS. Residues 18 to 764 are Extracellular-facing; sequence YKPPAIEVED…VQVNNAPKGS (747 aa). The 91-residue stretch at 20 to 110 folds into the Ig-like C2-type 1 domain; it reads PPAIEVEDYQ…RESDTGTYSC (91 aa). Cys-52 and Cys-110 are disulfide-bonded. N-linked (GlcNAc...) asparagine glycans are attached at residues Asn-119, Asn-211, Asn-245, Asn-255, Asn-381, Asn-425, and Asn-528. The region spanning 200–325 is the Ig-like C2-type 2 domain; sequence VNFECRYKKE…EHENKETKYT (126 aa). An intrachain disulfide couples Cys-204 to Cys-313. 2 consecutive Ig-like C2-type domains span residues 565 to 666 and 673 to 758; these read PHHE…TSID and PSIT…VQVN. Cystine bridges form between Cys-592–Cys-650 and Cys-696–Cys-740. N-linked (GlcNAc...) asparagine glycosylation occurs at Asn-697. A helical membrane pass occupies residues 765–785; the sequence is LFFYWFLALLLLISIIAVFLL. The Cytoplasmic portion of the chain corresponds to 786–1227; it reads TCKLRASNRL…ERYLIVESHA (442 aa). Residues 847 to 1175 form the Protein kinase domain; sequence LEILNPIGSG…HMRDSSSQFL (329 aa). Residues 853–861 and Lys-886 contribute to the ATP site; that span reads IGSGHFGVV. Asp-1030 acts as the Proton acceptor in catalysis. A disordered region spans residues 1194 to 1227; the sequence is DWIQDSRPDVPNVSFQKSPKKQKEERYLIVESHA. Positions 1214 to 1227 are enriched in basic and acidic residues; it reads KQKEERYLIVESHA.

This sequence belongs to the protein kinase superfamily. Tyr protein kinase family. In terms of tissue distribution, expressed in the ALA neuron.

The protein localises to the cell membrane. It carries out the reaction L-tyrosyl-[protein] + ATP = O-phospho-L-tyrosyl-[protein] + ADP + H(+). Functionally, receptor tyrosine kinase which may be involved, downstream of pvf-1, in the positioning of ray 1, the most anterior ray sensillum in the male tail. The chain is Tyrosine-protein kinase receptor ver-3 from Caenorhabditis elegans.